Reading from the N-terminus, the 61-residue chain is Transmembrane protein 300R (61 aa).

2 consecutive transmembrane segments (helical) span residues 5–25 (FLDL…FYLT) and 35–55 (SLSY…IYLQ).

Its subcellular location is the membrane. This chain is Transmembrane protein 300R, found in Invertebrate iridescent virus 6 (IIV-6).